The chain runs to 609 residues: Alpha-fetoprotein (609 aa).

An N-terminal signal peptide occupies residues 1–18 (MKWVESIFLIFLLNFTES). Albumin domains are found at residues 19-210 (RTLH…ATVT), 211-402 (KELR…EELQ), and 403-601 (KYIQ…KLIS). Residue histidine 22 participates in Cu(2+) binding. N-linked (GlcNAc...) asparagine glycosylation occurs at asparagine 42. Cystine bridges form between cysteine 99/cysteine 114, cysteine 113/cysteine 124, cysteine 148/cysteine 193, cysteine 192/cysteine 201, cysteine 224/cysteine 270, cysteine 269/cysteine 277, cysteine 289/cysteine 303, and cysteine 302/cysteine 313. A phosphoserine mark is found at serine 111, serine 115, and serine 117. The N-linked (GlcNAc...) asparagine glycan is linked to asparagine 251. Position 344 is a phosphoserine (serine 344). 7 cysteine pairs are disulfide-bonded: cysteine 384-cysteine 393, cysteine 416-cysteine 462, cysteine 461-cysteine 472, cysteine 485-cysteine 501, cysteine 500-cysteine 511, cysteine 538-cysteine 583, and cysteine 582-cysteine 591. Serine 444 is subject to Phosphoserine.

The protein belongs to the ALB/AFP/VDB family. Dimeric and trimeric forms have been found in addition to the monomeric form. Plasma. Synthesized by the fetal liver and yolk sac.

The protein localises to the secreted. In terms of biological role, binds copper, nickel, and fatty acids as well as, and bilirubin less well than, serum albumin. In Pan troglodytes (Chimpanzee), this protein is Alpha-fetoprotein (AFP).